A 141-amino-acid chain; its full sequence is HTH-type transcriptional regulator MntR (141 aa).

An HTH dtxR-type domain is found at Met1–Thr63. Positions 8, 11, 77, 99, 102, and 103 each coordinate Mn(2+).

This sequence belongs to the DtxR/MntR family. As to quaternary structure, homodimer.

The protein localises to the cytoplasm. DNA binding is strongly activated by Mn(2+). Central regulator of manganese homeostasis. The polypeptide is HTH-type transcriptional regulator MntR (Geobacillus thermodenitrificans (strain NG80-2)).